Reading from the N-terminus, the 298-residue chain is HTH-type transcriptional regulator TsaR (298 aa).

The HTH lysR-type domain maps to 1–58; the sequence is MKLQTLQALICIEEVGSLRAAAQLLHLSQPALSAAIQQLEDELKAPLLVRTKRGVSLT. A DNA-binding region (H-T-H motif) is located at residues 18–37; the sequence is LRAAAQLLHLSQPALSAAIQ. Positions 98 and 100 each coordinate toluene-4-sulfonate.

It belongs to the LysR transcriptional regulatory family. As to quaternary structure, homotetramer. Dimer of dimers related by a twofold axis.

Its activity is regulated as follows. Sensitive to oxygen. In terms of biological role, regulates expression of the tsaMBCD1 operon and of tsaT in response to p-toluenesulfonate (TSA). Acts by binding directly to the promoter region. Binding to the tsa promoter depends on TSA concentration. The polypeptide is HTH-type transcriptional regulator TsaR (tsaR) (Comamonas testosteroni (Pseudomonas testosteroni)).